The following is a 984-amino-acid chain: Pre-mRNA-splicing factor cwf10 (984 aa).

Positions methionine 1–glutamine 28 are disordered. The 264-residue stretch at aspartate 139 to glutamate 402 folds into the tr-type G domain. A G1 region spans residues glycine 148–serine 155. Glycine 148–serine 155 lines the GTP pocket. A G2 region spans residues valine 190–lysine 194. Positions aspartate 216–glycine 219 are G3. GTP contacts are provided by residues aspartate 216–histidine 220 and asparagine 270–aspartate 273. The segment at asparagine 270–aspartate 273 is G4. Residues glutamine 371–leucine 373 form a G5 region.

This sequence belongs to the TRAFAC class translation factor GTPase superfamily. Classic translation factor GTPase family. EF-G/EF-2 subfamily. As to quaternary structure, belongs to the 40S cdc5-associated complex (or cwf complex), a spliceosome sub-complex reminiscent of a late-stage spliceosome composed of the U2, U5 and U6 snRNAs and at least brr2, cdc5, cwf2/prp3, cwf3/syf1, cwf4/syf3, cwf5/ecm2, spp42/cwf6, cwf7/spf27, cwf8, cwf9, cwf10, cwf11, cwf12, prp45/cwf13, cwf14, cwf15, cwf16, cwf17, cwf18, cwf19, cwf20, cwf21, cwf22, cwf23, cwf24, cwf25, cwf26, cyp7/cwf27, cwf28, cwf29/ist3, lea1, msl1, prp5/cwf1, prp10, prp12/sap130, prp17, prp22, sap61, sap62, sap114, sap145, slu7, smb1, smd1, smd3, smf1, smg1 and syf2.

It is found in the cytoplasm. The protein localises to the nucleus. Component of the U5 snRNP complex required for pre-mRNA splicing. Binds GTP. This chain is Pre-mRNA-splicing factor cwf10 (cwf10), found in Schizosaccharomyces pombe (strain 972 / ATCC 24843) (Fission yeast).